A 151-amino-acid chain; its full sequence is Cytochrome c-type biogenesis protein CcmE (151 aa).

Residues 1–8 (MNPQRKKR) are Cytoplasmic-facing. A helical; Signal-anchor for type II membrane protein transmembrane segment spans residues 9–29 (LFLILGLLAGVAVAVGFALSA). Residues 30 to 151 (LQQNINLFYT…QAASGAEAKP (122 aa)) lie on the Periplasmic side of the membrane. Residues His124 and Tyr128 each contribute to the heme site.

It belongs to the CcmE/CycJ family.

The protein resides in the cell inner membrane. In terms of biological role, heme chaperone required for the biogenesis of c-type cytochromes. Transiently binds heme delivered by CcmC and transfers the heme to apo-cytochromes in a process facilitated by CcmF and CcmH. The protein is Cytochrome c-type biogenesis protein CcmE of Pseudomonas putida (strain W619).